A 240-amino-acid polypeptide reads, in one-letter code: Urease accessory protein UreF (240 aa).

The protein belongs to the UreF family. In terms of assembly, ureD, UreF and UreG form a complex that acts as a GTP-hydrolysis-dependent molecular chaperone, activating the urease apoprotein by helping to assemble the nickel containing metallocenter of UreC. The UreE protein probably delivers the nickel.

It is found in the cytoplasm. Required for maturation of urease via the functional incorporation of the urease nickel metallocenter. In Bradyrhizobium sp. (strain BTAi1 / ATCC BAA-1182), this protein is Urease accessory protein UreF.